The primary structure comprises 149 residues: Transcriptional repressor NrdR (149 aa).

A zinc finger spans residues 3–34 (CPFCFAVDTKVIDSRLVGEGSSVRRRRQCLVC). The 91-residue stretch at 49–139 (PRVVKSNDVR…VYRSFEDIKE (91 aa)) folds into the ATP-cone domain.

The protein belongs to the NrdR family. Requires Zn(2+) as cofactor.

In terms of biological role, negatively regulates transcription of bacterial ribonucleotide reductase nrd genes and operons by binding to NrdR-boxes. The chain is Transcriptional repressor NrdR from Escherichia fergusonii (strain ATCC 35469 / DSM 13698 / CCUG 18766 / IAM 14443 / JCM 21226 / LMG 7866 / NBRC 102419 / NCTC 12128 / CDC 0568-73).